The primary structure comprises 413 residues: Serine hydroxymethyltransferase (413 aa).

(6S)-5,6,7,8-tetrahydrofolate is bound by residues Leu-119 and 123–125 (GHL). At Lys-228 the chain carries N6-(pyridoxal phosphate)lysine. 351-353 (SPF) is a binding site for (6S)-5,6,7,8-tetrahydrofolate.

Belongs to the SHMT family. In terms of assembly, homodimer. Requires pyridoxal 5'-phosphate as cofactor.

Its subcellular location is the cytoplasm. The catalysed reaction is (6R)-5,10-methylene-5,6,7,8-tetrahydrofolate + glycine + H2O = (6S)-5,6,7,8-tetrahydrofolate + L-serine. The protein operates within one-carbon metabolism; tetrahydrofolate interconversion. It functions in the pathway amino-acid biosynthesis; glycine biosynthesis; glycine from L-serine: step 1/1. Its function is as follows. Catalyzes the reversible interconversion of serine and glycine with tetrahydrofolate (THF) serving as the one-carbon carrier. This reaction serves as the major source of one-carbon groups required for the biosynthesis of purines, thymidylate, methionine, and other important biomolecules. Also exhibits THF-independent aldolase activity toward beta-hydroxyamino acids, producing glycine and aldehydes, via a retro-aldol mechanism. This is Serine hydroxymethyltransferase from Clostridium botulinum (strain Okra / Type B1).